The following is a 120-amino-acid chain: Large ribosomal subunit protein bL17 (120 aa).

It belongs to the bacterial ribosomal protein bL17 family. As to quaternary structure, part of the 50S ribosomal subunit. Contacts protein L32.

The polypeptide is Large ribosomal subunit protein bL17 (Bacillus cereus (strain ATCC 14579 / DSM 31 / CCUG 7414 / JCM 2152 / NBRC 15305 / NCIMB 9373 / NCTC 2599 / NRRL B-3711)).